A 208-amino-acid chain; its full sequence is Peptidyl-tRNA hydrolase 2 (208 aa).

Over residues 32 to 45 (SNASSTKKSSATLL) the composition is skewed to low complexity. A disordered region spans residues 32–81 (SNASSTKKSSATLLRSKEMKEGKLHNDTDEEESESEDESDEDEDIESTSL). Residues 46–58 (RSKEMKEGKLHND) are compositionally biased toward basic and acidic residues. Residues 59 to 77 (TDEEESESEDESDEDEDIE) show a composition bias toward acidic residues. Lysine 152 participates in a covalent cross-link: Glycyl lysine isopeptide (Lys-Gly) (interchain with G-Cter in ubiquitin).

Belongs to the PTH2 family.

The protein resides in the cytoplasm. The enzyme catalyses an N-acyl-L-alpha-aminoacyl-tRNA + H2O = an N-acyl-L-amino acid + a tRNA + H(+). Functionally, the natural substrate for this enzyme may be peptidyl-tRNAs which drop off the ribosome during protein synthesis. The chain is Peptidyl-tRNA hydrolase 2 from Saccharomyces cerevisiae (strain ATCC 204508 / S288c) (Baker's yeast).